The primary structure comprises 325 residues: Beta-ketoacyl-[acyl-carrier-protein] synthase III (325 aa).

Active-site residues include cysteine 116 and histidine 252. The interval glutamine 253–arginine 257 is ACP-binding. Residue asparagine 282 is part of the active site.

The protein belongs to the thiolase-like superfamily. FabH family. In terms of assembly, homodimer.

It is found in the cytoplasm. It carries out the reaction malonyl-[ACP] + acetyl-CoA + H(+) = 3-oxobutanoyl-[ACP] + CO2 + CoA. The protein operates within lipid metabolism; fatty acid biosynthesis. Functionally, catalyzes the condensation reaction of fatty acid synthesis by the addition to an acyl acceptor of two carbons from malonyl-ACP. Catalyzes the first condensation reaction which initiates fatty acid synthesis and may therefore play a role in governing the total rate of fatty acid production. Possesses both acetoacetyl-ACP synthase and acetyl transacylase activities. Its substrate specificity determines the biosynthesis of branched-chain and/or straight-chain of fatty acids. The polypeptide is Beta-ketoacyl-[acyl-carrier-protein] synthase III (Xanthomonas axonopodis pv. citri (strain 306)).